We begin with the raw amino-acid sequence, 200 residues long: Probable GTP-binding protein EngB (200 aa).

One can recognise an EngB-type G domain in the interval 24-198 (EGMEVAFAGR…QAQLDEWLGI (175 aa)). Residues 32 to 39 (GRSNVGKS), 59 to 63 (GRTQM), 77 to 80 (DLPG), 144 to 147 (TKSD), and 177 to 179 (FSA) each bind GTP. Residues Ser-39 and Thr-61 each contribute to the Mg(2+) site.

The protein belongs to the TRAFAC class TrmE-Era-EngA-EngB-Septin-like GTPase superfamily. EngB GTPase family. Mg(2+) is required as a cofactor.

Necessary for normal cell division and for the maintenance of normal septation. This chain is Probable GTP-binding protein EngB, found in Nitrosococcus oceani (strain ATCC 19707 / BCRC 17464 / JCM 30415 / NCIMB 11848 / C-107).